The chain runs to 498 residues: RuvB-like helicase 2 (498 aa).

79–86 provides a ligand contact to ATP; the sequence is GPPSTGKT. The disordered stretch occupies residues 458–498; that stretch reads VTIGQESTDGSTQPQAKQQEVAQPEATQPQSQPEDDKMETD. Residues 461–489 show a composition bias toward polar residues; the sequence is GQESTDGSTQPQAKQQEVAQPEATQPQSQ.

This sequence belongs to the RuvB family. As to quaternary structure, may form heterododecamers with RVB1. Component of the SWR1 chromatin remodeling complex, the INO80 chromatin remodeling complex, and of the R2TP complex.

The protein resides in the nucleus. The enzyme catalyses ATP + H2O = ADP + phosphate + H(+). DNA helicase which participates in several chromatin remodeling complexes, including the SWR1 and the INO80 complexes. The SWR1 complex mediates the ATP-dependent exchange of histone H2A for the H2A variant HZT1 leading to transcriptional regulation of selected genes by chromatin remodeling. The INO80 complex remodels chromatin by shifting nucleosomes and is involved in DNA repair. Also involved in pre-rRNA processing. The sequence is that of RuvB-like helicase 2 (RVB2) from Candida albicans (strain SC5314 / ATCC MYA-2876) (Yeast).